Consider the following 493-residue polypeptide: Keratin, type II cuticular Hb3 (493 aa).

The interval 1–111 is head; sequence MTCGFNSIGC…PNAQCVKQEE (111 aa). Residues 111–422 enclose the IF rod domain; that stretch reads EKEQIKSLNS…RLLEGEEQRL (312 aa). The interval 112–146 is coil 1A; sequence KEQIKSLNSRFAAFIDKVRFLEQQNKLLETKLQFY. The segment at 147 to 156 is linker 1; sequence QNRECCQSNL. The segment at 157-257 is coil 1B; it reads EPLFAGYIET…YEEEIRILQS (101 aa). Residue Lys-217 forms a Glycyl lysine isopeptide (Lys-Gly) (interchain with G-Cter in SUMO1) linkage. The tract at residues 258–274 is linker 12; the sequence is HISDTSVVVKLDNSRDL. The coil 2 stretch occupies residues 275–418; the sequence is NMDCIVAEIK…ATYRRLLEGE (144 aa). The tail stretch occupies residues 419-493; that stretch reads EQRLCEGVEA…GGGSCGQGRH (75 aa).

The protein belongs to the intermediate filament family. Heterotetramer of two type I and two type II keratins. As to expression, synthesis begins in the cortex 10-15 cell layers above the apex of the dermal papilla and ends abruptly in the middle of the cortex.

The sequence is that of Keratin, type II cuticular Hb3 (KRT83) from Homo sapiens (Human).